An 83-amino-acid polypeptide reads, in one-letter code: Small ribosomal subunit protein bS16 (83 aa).

It belongs to the bacterial ribosomal protein bS16 family.

The protein is Small ribosomal subunit protein bS16 of Pseudomonas fluorescens (strain SBW25).